The chain runs to 323 residues: Aspartate carbamoyltransferase catalytic subunit (323 aa).

Carbamoyl phosphate-binding residues include R71 and T72. K99 is a binding site for L-aspartate. Residues R121, H151, and Q154 each coordinate carbamoyl phosphate. Residues R184 and R239 each coordinate L-aspartate. Carbamoyl phosphate is bound by residues G280 and P281.

It belongs to the aspartate/ornithine carbamoyltransferase superfamily. ATCase family. In terms of assembly, heterododecamer (2C3:3R2) of six catalytic PyrB chains organized as two trimers (C3), and six regulatory PyrI chains organized as three dimers (R2).

It carries out the reaction carbamoyl phosphate + L-aspartate = N-carbamoyl-L-aspartate + phosphate + H(+). It functions in the pathway pyrimidine metabolism; UMP biosynthesis via de novo pathway; (S)-dihydroorotate from bicarbonate: step 2/3. In terms of biological role, catalyzes the condensation of carbamoyl phosphate and aspartate to form carbamoyl aspartate and inorganic phosphate, the committed step in the de novo pyrimidine nucleotide biosynthesis pathway. The chain is Aspartate carbamoyltransferase catalytic subunit from Cupriavidus taiwanensis (strain DSM 17343 / BCRC 17206 / CCUG 44338 / CIP 107171 / LMG 19424 / R1) (Ralstonia taiwanensis (strain LMG 19424)).